A 301-amino-acid polypeptide reads, in one-letter code: 33 kDa chaperonin (301 aa).

Disulfide bonds link cysteine 239–cysteine 241 and cysteine 272–cysteine 275.

Belongs to the HSP33 family. Post-translationally, under oxidizing conditions two disulfide bonds are formed involving the reactive cysteines. Under reducing conditions zinc is bound to the reactive cysteines and the protein is inactive.

It is found in the cytoplasm. In terms of biological role, redox regulated molecular chaperone. Protects both thermally unfolding and oxidatively damaged proteins from irreversible aggregation. Plays an important role in the bacterial defense system toward oxidative stress. This Nostoc punctiforme (strain ATCC 29133 / PCC 73102) protein is 33 kDa chaperonin.